The following is a 1214-amino-acid chain: BOS complex subunit NOMO1 (1214 aa).

Positions 1–23 (MRAGRCAAALLLLLLSGAGRAIG) are cleaved as a signal peptide. Topologically, residues 24–1150 (SEDIVVGCGG…RKLPEQDIAQ (1127 aa)) are extracellular. N-linked (GlcNAc...) asparagine glycans are attached at residues asparagine 42, asparagine 210, and asparagine 610. Residues 692–720 (KSAQELRREQQLAEIETRRQEREKNGKEE) are a coiled coil. Residues 708 to 726 (TRRQEREKNGKEEGEEGRA) show a composition bias toward basic and acidic residues. The segment at 708-733 (TRRQEREKNGKEEGEEGRARPPGQEM) is disordered. A helical membrane pass occupies residues 1151–1167 (GSYIALPLTLLLLLAGY). The Cytoplasmic portion of the chain corresponds to 1168–1214 (NHDKLIPLLLQLTSRLQGVRALGQAASDSSGPEDMKRQTKKQKTRRT). The disordered stretch occupies residues 1190–1214 (GQAASDSSGPEDMKRQTKKQKTRRT). Residues serine 1196 and serine 1197 each carry the phosphoserine modification. Positions 1205 to 1214 (QTKKQKTRRT) are enriched in basic residues.

Component of the back of Sec61 (BOS) complex, composed of NCLN/Nicalin, NOMO (NOMO1, NOMO2 or NOMO3) and TMEM147. The BOS complex is part of the multi-pass translocon (MPT) complex, composed of three subcomplexes, the GEL complex (composed of RAB5IF/OPTI and TMCO1), the BOS complex (composed of NCLN/Nicalin, NOMO and TMEM147) and the PAT complex (composed of WDR83OS/Asterix and CCDC47). The MPT complex associates with the SEC61 complex.

Its subcellular location is the endoplasmic reticulum membrane. Component of the multi-pass translocon (MPT) complex that mediates insertion of multi-pass membrane proteins into the lipid bilayer of membranes. The MPT complex takes over after the SEC61 complex: following membrane insertion of the first few transmembrane segments of proteins by the SEC61 complex, the MPT complex occludes the lateral gate of the SEC61 complex to promote insertion of subsequent transmembrane regions. The chain is BOS complex subunit NOMO1 from Mus musculus (Mouse).